The chain runs to 103 residues: Small ribosomal subunit protein uS10 (103 aa).

Belongs to the universal ribosomal protein uS10 family. As to quaternary structure, part of the 30S ribosomal subunit.

Involved in the binding of tRNA to the ribosomes. The polypeptide is Small ribosomal subunit protein uS10 (Pseudoalteromonas atlantica (strain T6c / ATCC BAA-1087)).